We begin with the raw amino-acid sequence, 357 residues long: Phenylalanine--tRNA ligase alpha subunit (357 aa).

Glu257 lines the Mg(2+) pocket.

The protein belongs to the class-II aminoacyl-tRNA synthetase family. Phe-tRNA synthetase alpha subunit type 1 subfamily. Tetramer of two alpha and two beta subunits. Requires Mg(2+) as cofactor.

The protein resides in the cytoplasm. It carries out the reaction tRNA(Phe) + L-phenylalanine + ATP = L-phenylalanyl-tRNA(Phe) + AMP + diphosphate + H(+). The polypeptide is Phenylalanine--tRNA ligase alpha subunit (Ruegeria pomeroyi (strain ATCC 700808 / DSM 15171 / DSS-3) (Silicibacter pomeroyi)).